The following is a 133-amino-acid chain: Ribonuclease VapC1 (133 aa).

Positions 7 and 98 each coordinate Mg(2+).

It belongs to the PINc/VapC protein family. Requires Mg(2+) as cofactor.

Its function is as follows. Toxic component of a type II toxin-antitoxin (TA) system. The cognate antitoxin is VapB1. This chain is Ribonuclease VapC1, found in Mycobacterium tuberculosis (strain CDC 1551 / Oshkosh).